The primary structure comprises 122 residues: Serum amyloid A-1 protein (122 aa).

Residues Met-1–Gln-19 form the signal peptide. The segment at Arg-20–Ala-45 is important for amyloid formation. The disordered stretch occupies residues Met-87–Tyr-122. Positions Arg-105–Tyr-122 are enriched in basic and acidic residues.

The protein belongs to the SAA family. As to quaternary structure, homohexamer; dimer of trimers. Can form amyloid fibrils after partial proteolysis; the native, undenatured protein does not form amyloid fibrils (in vitro). Apolipoprotein of the HDL complex. Binds to heparin. In terms of tissue distribution, detected in liver.

It localises to the secreted. In terms of biological role, major acute phase protein. In Oryctolagus cuniculus (Rabbit), this protein is Serum amyloid A-1 protein (SAA1).